A 364-amino-acid polypeptide reads, in one-letter code: Mannose-1-phosphate guanyltransferase (364 aa).

It belongs to the transferase hexapeptide repeat family.

The protein localises to the cytoplasm. It carries out the reaction alpha-D-mannose 1-phosphate + GTP + H(+) = GDP-alpha-D-mannose + diphosphate. Its pathway is nucleotide-sugar biosynthesis; GDP-alpha-D-mannose biosynthesis; GDP-alpha-D-mannose from alpha-D-mannose 1-phosphate (GTP route): step 1/1. Involved in cell wall synthesis where it is required for glycosylation. Involved in cell cycle progression through cell-size checkpoint. This chain is Mannose-1-phosphate guanyltransferase (MPG1), found in Cryptococcus neoformans var. neoformans serotype D (strain B-3501A) (Filobasidiella neoformans).